Consider the following 383-residue polypeptide: Flagellum-associated coiled-coil domain-containing protein 1 (383 aa).

The interval 26 to 79 (PYPLPKHPTGKFKPVLPPPISKEHNSLLSQPGKSTVSPRDKVQSGNTESSKAPS) is disordered. Residues 51-77 (SLLSQPGKSTVSPRDKVQSGNTESSKA) are compositionally biased toward polar residues. 2 coiled-coil regions span residues 125–220 (TDII…YLKS) and 276–359 (KKMN…FQTK). Residue Lys354 is modified to N6-acetyllysine.

As to expression, isoform 1 is specific to germ cells of the testis and localizes to the principal piece of the sperm flagellum. Isoform 2 seems to be expressed mainly in somatic cells of the testis, and is not detected in mature spermatozoa (at protein level). Isoform 2 may also be expressed weakly in brain.

Its subcellular location is the cytoplasm. The protein resides in the cytoplasmic granule. It is found in the cell projection. The protein localises to the cilium. It localises to the flagellum. This chain is Flagellum-associated coiled-coil domain-containing protein 1, found in Mus musculus (Mouse).